The chain runs to 312 residues: Olfactory receptor 10K2 (312 aa).

Residues 1 to 25 (MERVNETVVREVIFLGFSSLARLQQ) are Extracellular-facing. An N-linked (GlcNAc...) asparagine glycan is attached at Asn-5. Residues 26–46 (LLFVIFLLLYLFTLGTNAIII) traverse the membrane as a helical segment. Residues 47–54 (STIVLDRA) are Cytoplasmic-facing. A helical membrane pass occupies residues 55–75 (LHIPMYFFLAILSCSEICYTF). The Extracellular segment spans residues 76–99 (IIVPKMLVDLLSQKKTISFLGCAI). The helical transmembrane segment at 100–120 (QMFSFLFLGCSHSFLLAVMGY) threads the bilayer. Topologically, residues 121 to 139 (DRYIAICNPLRYSVLMGHG) are cytoplasmic. A helical membrane pass occupies residues 140-160 (VCMGLVAAACACGFTVAQIIT). The Extracellular segment spans residues 161–197 (SLVFHLPFYSSNQLHHFFCDIAPVLKLASHHNHFSQI). A helical membrane pass occupies residues 198 to 217 (VIFMLCTLVLAIPLLLILVS). Topologically, residues 218-237 (YVHILSAILQFPSTLGRCKA) are cytoplasmic. Residues 238–258 (FSTCVSHLIIVTVHYGCASFI) form a helical membrane-spanning segment. Topologically, residues 259–271 (YLRPQSNYSSSQD) are extracellular. Residue Asn-265 is glycosylated (N-linked (GlcNAc...) asparagine). The chain crosses the membrane as a helical span at residues 272-292 (ALISVSYTIITPLFNPMIYSL). Topologically, residues 293-312 (RNKEFKSALCKIVRRTISLL) are cytoplasmic.

Belongs to the G-protein coupled receptor 1 family.

It is found in the cell membrane. Odorant receptor. This chain is Olfactory receptor 10K2 (OR10K2), found in Homo sapiens (Human).